Consider the following 197-residue polypeptide: Large ribosomal subunit protein bL25 (197 aa).

This sequence belongs to the bacterial ribosomal protein bL25 family. CTC subfamily. As to quaternary structure, part of the 50S ribosomal subunit; part of the 5S rRNA/L5/L18/L25 subcomplex. Contacts the 5S rRNA. Binds to the 5S rRNA independently of L5 and L18.

In terms of biological role, this is one of the proteins that binds to the 5S RNA in the ribosome where it forms part of the central protuberance. This chain is Large ribosomal subunit protein bL25, found in Hydrogenobaculum sp. (strain Y04AAS1).